The chain runs to 132 residues: MTMTDPIADFLTRLRNANSAYHDQVKAPHSKLKANIAEILKREGYIADYRTEDAQVGKTLVVDLKYGPSRERSLAGVRRVSKPGLRVYAKSTNLPKVLGGLGVAIISTSQGLLTDKQAAKQGVGGEVLAYVW.

It belongs to the universal ribosomal protein uS8 family. Part of the 30S ribosomal subunit. Contacts proteins S5 and S12.

Its function is as follows. One of the primary rRNA binding proteins, it binds directly to 16S rRNA central domain where it helps coordinate assembly of the platform of the 30S subunit. This Nocardia farcinica (strain IFM 10152) protein is Small ribosomal subunit protein uS8.